A 54-amino-acid polypeptide reads, in one-letter code: Defensin-like protein (54 aa).

Gln-1 bears the Pyrrolidone carboxylic acid mark. Intrachain disulfides connect Cys-4-Cys-52, Cys-16-Cys-37, Cys-22-Cys-47, and Cys-26-Cys-49.

Belongs to the DEFL family. As to quaternary structure, monomer.

It localises to the secreted. Functionally, taste-modifying protein; sweet-tasting. It is 2000 sweeter than sucrose on a molar basis. Its function is as follows. Has a pH-specific antimicrobial activity against bacteria (B.subtilis, E.coli and S.aureus) and the fungus C.albicans. This chain is Defensin-like protein, found in Pentadiplandra brazzeana.